Here is a 139-residue protein sequence, read N- to C-terminus: Large ribosomal subunit protein uL16 (139 aa).

Residues 1-20 show a composition bias toward basic residues; that stretch reads MLIPRRVKHRKQHHPKRRGM. Residues 1-22 form a disordered region; that stretch reads MLIPRRVKHRKQHHPKRRGMAK.

Belongs to the universal ribosomal protein uL16 family. Part of the 50S ribosomal subunit.

In terms of biological role, binds 23S rRNA and is also seen to make contacts with the A and possibly P site tRNAs. The sequence is that of Large ribosomal subunit protein uL16 from Streptomyces coelicolor (strain ATCC BAA-471 / A3(2) / M145).